A 148-amino-acid chain; its full sequence is NADPH-dependent 7-cyano-7-deazaguanine reductase (148 aa).

The Thioimide intermediate role is filled by Cys50. Residue Asp57 is the Proton donor of the active site. Residues 72–74 and 91–92 contribute to the substrate site; these read VES and HE.

The protein belongs to the GTP cyclohydrolase I family. QueF type 1 subfamily.

Its subcellular location is the cytoplasm. The catalysed reaction is 7-aminomethyl-7-carbaguanine + 2 NADP(+) = 7-cyano-7-deazaguanine + 2 NADPH + 3 H(+). It participates in tRNA modification; tRNA-queuosine biosynthesis. Catalyzes the NADPH-dependent reduction of 7-cyano-7-deazaguanine (preQ0) to 7-aminomethyl-7-deazaguanine (preQ1). The sequence is that of NADPH-dependent 7-cyano-7-deazaguanine reductase from Helicobacter acinonychis (strain Sheeba).